Consider the following 270-residue polypeptide: MRGPRLPALPALLWLALAPLPGPAARAELRVRVRLPGGQVTEESLQADSGSDCISLELRKADGALITLTADFRQEVKIFRALILGELERGQSQFQALCFVTRLHRNEIIPSESMAKLRQKNPRTVRQAEEVRGLEHLSMDVAVNFSKGAQLSSHIHNVCAEAKEAIYTREEDVKFWLEKGMDGSMFEVLPQTSDLPDLQRCKLCTDRWKPCICSYSLSIEWYPCMLKYCKSRDAAGKVSSYKCGIRSCQKGYTFDYYVPQKQLCLWDEET.

An N-terminal signal peptide occupies residues 1-24; that stretch reads MRGPRLPALPALLWLALAPLPGPA.

This sequence belongs to the OAF family.

The polypeptide is Out at first protein homolog (oaf) (Gallus gallus (Chicken)).